The chain runs to 258 residues: Ribose-5-phosphate isomerase (258 aa).

The protein belongs to the ribose 5-phosphate isomerase family.

The protein resides in the cytoplasm. The enzyme catalyses aldehydo-D-ribose 5-phosphate = D-ribulose 5-phosphate. The protein operates within carbohydrate degradation; pentose phosphate pathway; D-ribose 5-phosphate from D-ribulose 5-phosphate (non-oxidative stage): step 1/1. In Saccharomyces cerevisiae (strain YJM789) (Baker's yeast), this protein is Ribose-5-phosphate isomerase (RKI1).